The chain runs to 968 residues: Ribonuclease E (968 aa).

Residues 39 to 119 enclose the S1 motif domain; it reads SNIYKGKITR…GTKGAALTTF (81 aa). Mg(2+) contacts are provided by D303 and D346. Residues C404 and C407 each coordinate Zn(2+). Positions 404–407 are required for zinc-mediated homotetramerization and catalytic activity; that stretch reads CPRC. The tract at residues 947–968 is disordered; that stretch reads IKNSAGAHSATNFSTSPVKKSE. A compositionally biased stretch (polar residues) spans 955-968; it reads SATNFSTSPVKKSE.

It belongs to the RNase E/G family. RNase E subfamily. In terms of assembly, component of the RNA degradosome, which is a multiprotein complex involved in RNA processing and mRNA degradation. Within the RNA degradosome, RNase E assembles into a homotetramer formed by a dimer of dimers. Requires Zn(2+) as cofactor. Mg(2+) serves as cofactor.

The protein resides in the cytoplasm. It is found in the cell inner membrane. It carries out the reaction Endonucleolytic cleavage of single-stranded RNA in A- and U-rich regions.. Functionally, endoribonuclease that plays a central role in RNA processing and decay. Required for the maturation of 5S and 16S rRNAs and the majority of tRNAs. Also involved in the degradation of most mRNAs. In Buchnera aphidicola subsp. Schizaphis graminum (strain Sg), this protein is Ribonuclease E.